The primary structure comprises 283 residues: Thymidylate synthase (283 aa).

Arginine 22 contacts dUMP. Cysteine 160 acts as the Nucleophile in catalysis. DUMP-binding positions include arginine 180–aspartate 183, asparagine 191, and histidine 221–tyrosine 223. Aspartate 183 contacts (6R)-5,10-methylene-5,6,7,8-tetrahydrofolate. Serine 282 is a binding site for (6R)-5,10-methylene-5,6,7,8-tetrahydrofolate.

It belongs to the thymidylate synthase family. Bacterial-type ThyA subfamily. As to quaternary structure, homodimer.

Its subcellular location is the cytoplasm. The enzyme catalyses dUMP + (6R)-5,10-methylene-5,6,7,8-tetrahydrofolate = 7,8-dihydrofolate + dTMP. It participates in pyrimidine metabolism; dTTP biosynthesis. Functionally, catalyzes the reductive methylation of 2'-deoxyuridine-5'-monophosphate (dUMP) to 2'-deoxythymidine-5'-monophosphate (dTMP) while utilizing 5,10-methylenetetrahydrofolate (mTHF) as the methyl donor and reductant in the reaction, yielding dihydrofolate (DHF) as a by-product. This enzymatic reaction provides an intracellular de novo source of dTMP, an essential precursor for DNA biosynthesis. The polypeptide is Thymidylate synthase (Pseudoalteromonas translucida (strain TAC 125)).